Consider the following 428-residue polypeptide: Gamma-glutamyl phosphate reductase (428 aa).

Belongs to the gamma-glutamyl phosphate reductase family.

The protein localises to the cytoplasm. It carries out the reaction L-glutamate 5-semialdehyde + phosphate + NADP(+) = L-glutamyl 5-phosphate + NADPH + H(+). It functions in the pathway amino-acid biosynthesis; L-proline biosynthesis; L-glutamate 5-semialdehyde from L-glutamate: step 2/2. Functionally, catalyzes the NADPH-dependent reduction of L-glutamate 5-phosphate into L-glutamate 5-semialdehyde and phosphate. The product spontaneously undergoes cyclization to form 1-pyrroline-5-carboxylate. This is Gamma-glutamyl phosphate reductase from Hyphomonas neptunium (strain ATCC 15444).